Consider the following 298-residue polypeptide: 4-hydroxy-3-methylbut-2-enyl diphosphate reductase (298 aa).

Residue Cys-12 participates in [4Fe-4S] cluster binding. The (2E)-4-hydroxy-3-methylbut-2-enyl diphosphate site is built by His-40 and His-78. Dimethylallyl diphosphate-binding residues include His-40 and His-78. The isopentenyl diphosphate site is built by His-40 and His-78. Cys-100 is a [4Fe-4S] cluster binding site. Residue His-128 coordinates (2E)-4-hydroxy-3-methylbut-2-enyl diphosphate. Dimethylallyl diphosphate is bound at residue His-128. An isopentenyl diphosphate-binding site is contributed by His-128. The Proton donor role is filled by Glu-130. Position 171 (Thr-171) interacts with (2E)-4-hydroxy-3-methylbut-2-enyl diphosphate. Cys-200 lines the [4Fe-4S] cluster pocket. (2E)-4-hydroxy-3-methylbut-2-enyl diphosphate contacts are provided by Ser-228, Ser-229, Asn-230, and Ser-270. 4 residues coordinate dimethylallyl diphosphate: Ser-228, Ser-229, Asn-230, and Ser-270. Positions 228, 229, 230, and 270 each coordinate isopentenyl diphosphate.

This sequence belongs to the IspH family. [4Fe-4S] cluster is required as a cofactor.

The catalysed reaction is isopentenyl diphosphate + 2 oxidized [2Fe-2S]-[ferredoxin] + H2O = (2E)-4-hydroxy-3-methylbut-2-enyl diphosphate + 2 reduced [2Fe-2S]-[ferredoxin] + 2 H(+). The enzyme catalyses dimethylallyl diphosphate + 2 oxidized [2Fe-2S]-[ferredoxin] + H2O = (2E)-4-hydroxy-3-methylbut-2-enyl diphosphate + 2 reduced [2Fe-2S]-[ferredoxin] + 2 H(+). Its pathway is isoprenoid biosynthesis; dimethylallyl diphosphate biosynthesis; dimethylallyl diphosphate from (2E)-4-hydroxy-3-methylbutenyl diphosphate: step 1/1. The protein operates within isoprenoid biosynthesis; isopentenyl diphosphate biosynthesis via DXP pathway; isopentenyl diphosphate from 1-deoxy-D-xylulose 5-phosphate: step 6/6. Functionally, catalyzes the conversion of 1-hydroxy-2-methyl-2-(E)-butenyl 4-diphosphate (HMBPP) into a mixture of isopentenyl diphosphate (IPP) and dimethylallyl diphosphate (DMAPP). Acts in the terminal step of the DOXP/MEP pathway for isoprenoid precursor biosynthesis. This is 4-hydroxy-3-methylbut-2-enyl diphosphate reductase from Kosmotoga olearia (strain ATCC BAA-1733 / DSM 21960 / TBF 19.5.1).